The following is a 206-amino-acid chain: Sperm acrosome developmental regulator (206 aa).

The tract at residues 180 to 206 is disordered; the sequence is RRHHVRCHAAPRPNPAQSLKLDAQSPL.

In terms of tissue distribution, expressed in sperm (at protein level).

The protein resides in the cytoplasmic vesicle. It localises to the secretory vesicle. It is found in the acrosome. In terms of biological role, may play a role in acrosome formation and nucleus shaping during spermiogenesis. This Homo sapiens (Human) protein is Sperm acrosome developmental regulator.